Reading from the N-terminus, the 344-residue chain is Dihydroorotase (344 aa).

Positions 13 and 15 each coordinate Zn(2+). Residues 15–17 (HLR) and asparagine 41 each bind substrate. Zn(2+) contacts are provided by lysine 98, histidine 135, and histidine 173. An N6-carboxylysine modification is found at lysine 98. A substrate-binding site is contributed by histidine 135. Leucine 218 contributes to the substrate binding site. Aspartate 247 serves as a coordination point for Zn(2+). The active site involves aspartate 247. The substrate site is built by histidine 251 and alanine 263.

Belongs to the metallo-dependent hydrolases superfamily. DHOase family. Class II DHOase subfamily. As to quaternary structure, homodimer. It depends on Zn(2+) as a cofactor.

It carries out the reaction (S)-dihydroorotate + H2O = N-carbamoyl-L-aspartate + H(+). Its pathway is pyrimidine metabolism; UMP biosynthesis via de novo pathway; (S)-dihydroorotate from bicarbonate: step 3/3. In terms of biological role, catalyzes the reversible cyclization of carbamoyl aspartate to dihydroorotate. In Neisseria meningitidis serogroup C (strain 053442), this protein is Dihydroorotase.